The following is a 199-amino-acid chain: dCTP deaminase, dUMP-forming (199 aa).

DCTP is bound by residues 101–106, D119, 127–129, Q148, Y162, and Q174; these read KSSLGR and TLE. E129 functions as the Proton donor/acceptor in the catalytic mechanism. The segment at 163 to 199 is disordered; that stretch reads GSAAAGSKYQGQRGPTPSRSYLNFPLPSDAVDAVESR. Positions 171–183 are enriched in polar residues; the sequence is YQGQRGPTPSRSY.

It belongs to the dCTP deaminase family. In terms of assembly, homotrimer.

The catalysed reaction is dCTP + 2 H2O = dUMP + NH4(+) + diphosphate. It participates in pyrimidine metabolism; dUMP biosynthesis; dUMP from dCTP: step 1/1. Its function is as follows. Bifunctional enzyme that catalyzes both the deamination of dCTP to dUTP and the hydrolysis of dUTP to dUMP without releasing the toxic dUTP intermediate. The protein is dCTP deaminase, dUMP-forming of Nocardia farcinica (strain IFM 10152).